A 339-amino-acid polypeptide reads, in one-letter code: Cyclin-Y-like protein 1-A (339 aa).

Over residues 1–13 (MGNTVTCCVSPDS) the composition is skewed to polar residues. The disordered stretch occupies residues 1-42 (MGNTVTCCVSPDSSPKEGRDREVTESGEPYQAQGEPQDGDVQ). A compositionally biased stretch (basic and acidic residues) spans 14–24 (SPKEGRDREVT). The Cyclin N-terminal domain maps to 141-263 (DIFDEKLHPI…FLELLQFNIN (123 aa)).

This sequence belongs to the cyclin family. Cyclin Y subfamily.

The sequence is that of Cyclin-Y-like protein 1-A (ccnyl1-a) from Xenopus laevis (African clawed frog).